A 212-amino-acid chain; its full sequence is Thymidylate kinase (212 aa).

Residue 11 to 18 participates in ATP binding; it reads GLEGAGKT.

Belongs to the thymidylate kinase family.

The enzyme catalyses dTMP + ATP = dTDP + ADP. In terms of biological role, phosphorylation of dTMP to form dTDP in both de novo and salvage pathways of dTTP synthesis. In Buchnera aphidicola subsp. Acyrthosiphon pisum (strain APS) (Acyrthosiphon pisum symbiotic bacterium), this protein is Thymidylate kinase (tmk).